The primary structure comprises 740 residues: Anaphase-promoting complex subunit 5 (740 aa).

Ser180 carries the post-translational modification Phosphoserine. TPR repeat units follow at residues 194 to 234, 235 to 285, 286 to 322, 323 to 363, 364 to 403, 404 to 451, 452 to 485, 486 to 525, 526 to 565, 566 to 605, 606 to 645, 646 to 681, and 682 to 721; these read QKQA…FNPD, FAEA…GRSL, RYAA…SNDH, VCLQ…YLAS, LGIQ…SELI, DISI…TESF, AVAL…FPPN, SQHA…ALNG, IEGV…TEMV, ISVL…QYLA, SETV…VLDK, GRAM…NLSE, and AKNY…CAMI. Thr217 carries the phosphothreonine modification.

It belongs to the APC5 family. As to quaternary structure, the mammalian APC/C is composed at least of 14 distinct subunits ANAPC1, ANAPC2, CDC27/APC3, ANAPC4, ANAPC5, CDC16/APC6, ANAPC7, CDC23/APC8, ANAPC10, ANAPC11, CDC26/APC12, ANAPC13, ANAPC15 and ANAPC16 that assemble into a complex of at least 19 chains with a combined molecular mass of around 1.2 MDa; APC/C interacts with FZR1 and FBXO5.

Its subcellular location is the nucleus. The protein localises to the cytoplasm. It is found in the cytoskeleton. The protein resides in the spindle. The protein operates within protein modification; protein ubiquitination. Its function is as follows. Component of the anaphase promoting complex/cyclosome (APC/C), a cell cycle-regulated E3 ubiquitin ligase that controls progression through mitosis and the G1 phase of the cell cycle. The APC/C complex acts by mediating ubiquitination and subsequent degradation of target proteins: it mainly mediates the formation of 'Lys-11'-linked polyubiquitin chains and, to a lower extent, the formation of 'Lys-48'- and 'Lys-63'-linked polyubiquitin chains. The APC/C complex catalyzes assembly of branched 'Lys-11'-/'Lys-48'-linked branched ubiquitin chains on target proteins. The chain is Anaphase-promoting complex subunit 5 (Anapc5) from Mus musculus (Mouse).